Consider the following 227-residue polypeptide: Cytochrome c oxidase subunit 2 (227 aa).

The Mitochondrial intermembrane segment spans residues 1-26 (MATWSNLSLQDGASPLMEQLSFFHDH). Residues 27–48 (TMIDLLLITMIVGYSLSYMLLT) traverse the membrane as a helical segment. Over 49-62 (KYTNRNMLHGHLIE) the chain is Mitochondrial matrix. A helical membrane pass occupies residues 63–82 (TIWTALPAITLIFIALPSLR). Residues 83–227 (LLYLLDDSSD…LFIKWLSNMM (145 aa)) lie on the Mitochondrial intermembrane side of the membrane. 6 residues coordinate Cu cation: H161, C196, E198, C200, H204, and M207. E198 contacts Mg(2+).

It belongs to the cytochrome c oxidase subunit 2 family. As to quaternary structure, component of the cytochrome c oxidase (complex IV, CIV), a multisubunit enzyme composed of a catalytic core of 3 subunits and several supernumerary subunits. The complex exists as a monomer or a dimer and forms supercomplexes (SCs) in the inner mitochondrial membrane with ubiquinol-cytochrome c oxidoreductase (cytochrome b-c1 complex, complex III, CIII). Cu cation is required as a cofactor.

It is found in the mitochondrion inner membrane. It catalyses the reaction 4 Fe(II)-[cytochrome c] + O2 + 8 H(+)(in) = 4 Fe(III)-[cytochrome c] + 2 H2O + 4 H(+)(out). Its function is as follows. Component of the cytochrome c oxidase, the last enzyme in the mitochondrial electron transport chain which drives oxidative phosphorylation. The respiratory chain contains 3 multisubunit complexes succinate dehydrogenase (complex II, CII), ubiquinol-cytochrome c oxidoreductase (cytochrome b-c1 complex, complex III, CIII) and cytochrome c oxidase (complex IV, CIV), that cooperate to transfer electrons derived from NADH and succinate to molecular oxygen, creating an electrochemical gradient over the inner membrane that drives transmembrane transport and the ATP synthase. Cytochrome c oxidase is the component of the respiratory chain that catalyzes the reduction of oxygen to water. Electrons originating from reduced cytochrome c in the intermembrane space (IMS) are transferred via the dinuclear copper A center (CU(A)) of subunit 2 and heme A of subunit 1 to the active site in subunit 1, a binuclear center (BNC) formed by heme A3 and copper B (CU(B)). The BNC reduces molecular oxygen to 2 water molecules using 4 electrons from cytochrome c in the IMS and 4 protons from the mitochondrial matrix. The polypeptide is Cytochrome c oxidase subunit 2 (COII) (Locusta migratoria (Migratory locust)).